Reading from the N-terminus, the 266-residue chain is MAVGKNKRLTKGGKKGAKKKIVDPFSKKDWYDVKAPAMFNIRNLGKTLVTRTQGTKIASDGLKGRVFEVSLADLQNDEVAFRKFKLITEDVQGKNCLTNFHGMDLTRDKMCSMVKKWQTMIEAHVDVKTTDGYLLRLFCVGFTKKRNNQVRKTSYAQHQQVRQIRKKMMEIMTREVQTNDLKEVVNKLIPDSVGKDIEKACQSIYPLHDVYVRKVKMLKKPKFELGKLMELHGEGGAGGAAKASGDDTGAKVERADGYEPPIQETV.

Positions 235–266 (GGAGGAAKASGDDTGAKVERADGYEPPIQETV) are disordered. Positions 244–257 (SGDDTGAKVERADG) are enriched in basic and acidic residues.

Belongs to the eukaryotic ribosomal protein eS1 family. As to quaternary structure, component of the small ribosomal subunit. Mature ribosomes consist of a small (40S) and a large (60S) subunit. The 40S subunit contains about 33 different proteins and 1 molecule of RNA (18S). The 60S subunit contains about 49 different proteins and 3 molecules of RNA (28S, 5.8S and 5S).

It is found in the cytoplasm. In terms of biological role, component of the small ribosomal subunit. The ribosome is a large ribonucleoprotein complex responsible for the synthesis of proteins in the cell. The chain is Small ribosomal subunit protein eS1 (rps3a) from Oryzias latipes (Japanese rice fish).